We begin with the raw amino-acid sequence, 330 residues long: Anthranilate phosphoribosyltransferase (330 aa).

Residues Gly77, 80 to 81, Thr85, 87 to 90, 105 to 113, and Ser117 each bind 5-phospho-alpha-D-ribose 1-diphosphate; these read GD, NIST, and KHGNKAVSS. Gly77 lines the anthranilate pocket. Residue Ser89 participates in Mg(2+) binding. Asn108 is a binding site for anthranilate. An anthranilate-binding site is contributed by Arg163. Mg(2+) contacts are provided by Asp222 and Glu223.

The protein belongs to the anthranilate phosphoribosyltransferase family. In terms of assembly, homodimer. Requires Mg(2+) as cofactor.

The enzyme catalyses N-(5-phospho-beta-D-ribosyl)anthranilate + diphosphate = 5-phospho-alpha-D-ribose 1-diphosphate + anthranilate. The protein operates within amino-acid biosynthesis; L-tryptophan biosynthesis; L-tryptophan from chorismate: step 2/5. Catalyzes the transfer of the phosphoribosyl group of 5-phosphorylribose-1-pyrophosphate (PRPP) to anthranilate to yield N-(5'-phosphoribosyl)-anthranilate (PRA). This chain is Anthranilate phosphoribosyltransferase, found in Pelagibacter ubique (strain HTCC1062).